Reading from the N-terminus, the 106-residue chain is Large ribosomal subunit protein bL21 (106 aa).

This sequence belongs to the bacterial ribosomal protein bL21 family. As to quaternary structure, part of the 50S ribosomal subunit. Contacts protein L20.

In terms of biological role, this protein binds to 23S rRNA in the presence of protein L20. The polypeptide is Large ribosomal subunit protein bL21 (Streptomyces coelicolor (strain ATCC BAA-471 / A3(2) / M145)).